Reading from the N-terminus, the 384-residue chain is 8-amino-7-oxononanoate synthase (384 aa).

Residue Arg21 coordinates substrate. Residue Gly108–Tyr109 coordinates pyridoxal 5'-phosphate. His133 contributes to the substrate binding site. 3 residues coordinate pyridoxal 5'-phosphate: Ser179, His207, and Thr233. Position 236 is an N6-(pyridoxal phosphate)lysine (Lys236). Thr350 serves as a coordination point for substrate.

The protein belongs to the class-II pyridoxal-phosphate-dependent aminotransferase family. BioF subfamily. Homodimer. Requires pyridoxal 5'-phosphate as cofactor.

The catalysed reaction is 6-carboxyhexanoyl-[ACP] + L-alanine + H(+) = (8S)-8-amino-7-oxononanoate + holo-[ACP] + CO2. It participates in cofactor biosynthesis; biotin biosynthesis. Catalyzes the decarboxylative condensation of pimeloyl-[acyl-carrier protein] and L-alanine to produce 8-amino-7-oxononanoate (AON), [acyl-carrier protein], and carbon dioxide. The protein is 8-amino-7-oxononanoate synthase of Buchnera aphidicola subsp. Baizongia pistaciae (strain Bp).